The following is a 37-amino-acid chain: Large ribosomal subunit protein bL36 (37 aa).

This sequence belongs to the bacterial ribosomal protein bL36 family.

The protein is Large ribosomal subunit protein bL36 of Aquifex aeolicus (strain VF5).